Reading from the N-terminus, the 98-residue chain is NADH-ubiquinone oxidoreductase chain 4L (98 aa).

The next 3 membrane-spanning stretches (helical) occupy residues 1 to 21 (MSLT…GLLL), 29 to 49 (SLLC…MVIL), and 61 to 81 (IILL…LVMV).

It belongs to the complex I subunit 4L family. In terms of assembly, core subunit of respiratory chain NADH dehydrogenase (Complex I) which is composed of 45 different subunits.

The protein resides in the mitochondrion inner membrane. It carries out the reaction a ubiquinone + NADH + 5 H(+)(in) = a ubiquinol + NAD(+) + 4 H(+)(out). Functionally, core subunit of the mitochondrial membrane respiratory chain NADH dehydrogenase (Complex I) which catalyzes electron transfer from NADH through the respiratory chain, using ubiquinone as an electron acceptor. Part of the enzyme membrane arm which is embedded in the lipid bilayer and involved in proton translocation. The chain is NADH-ubiquinone oxidoreductase chain 4L (MT-ND4L) from Platyrrhinus helleri (Heller's broad-nosed bat).